The primary structure comprises 124 residues: MSRYELTVQVRTRYLPEQSEPSQDQYAFAYTITIRNTGEVPSQLVSRHWVITDAESHVQEVAGLGVVGHQPLLPPGESFEYTSWATIKTPVGTMRGEYFCVAEDGHRFEAPIPEFALAMPRMLH.

In terms of domain architecture, ApaG spans 1–124 (MSRYELTVQV…FALAMPRMLH (124 aa)).

In Ralstonia nicotianae (strain ATCC BAA-1114 / GMI1000) (Ralstonia solanacearum), this protein is Protein ApaG.